A 413-amino-acid polypeptide reads, in one-letter code: Gamma-glutamyl phosphate reductase (413 aa).

It belongs to the gamma-glutamyl phosphate reductase family.

It localises to the cytoplasm. The catalysed reaction is L-glutamate 5-semialdehyde + phosphate + NADP(+) = L-glutamyl 5-phosphate + NADPH + H(+). It functions in the pathway amino-acid biosynthesis; L-proline biosynthesis; L-glutamate 5-semialdehyde from L-glutamate: step 2/2. In terms of biological role, catalyzes the NADPH-dependent reduction of L-glutamate 5-phosphate into L-glutamate 5-semialdehyde and phosphate. The product spontaneously undergoes cyclization to form 1-pyrroline-5-carboxylate. The sequence is that of Gamma-glutamyl phosphate reductase from Lactococcus lactis subsp. cremoris (strain MG1363).